Here is a 284-residue protein sequence, read N- to C-terminus: tRNA uridine(34) hydroxylase (284 aa).

Residues A132–Y226 form the Rhodanese domain. The active-site Cysteine persulfide intermediate is C186.

Belongs to the TrhO family.

The enzyme catalyses uridine(34) in tRNA + AH2 + O2 = 5-hydroxyuridine(34) in tRNA + A + H2O. Functionally, catalyzes oxygen-dependent 5-hydroxyuridine (ho5U) modification at position 34 in tRNAs. This is tRNA uridine(34) hydroxylase from Burkholderia ambifaria (strain MC40-6).